A 392-amino-acid polypeptide reads, in one-letter code: Zinc transporter zipt-7.1 (392 aa).

N63 carries an N-linked (GlcNAc...) asparagine glycan. 2 consecutive transmembrane segments (helical) span residues 82-102 (VFSL…LFFI) and 114-134 (ILLA…IIPH). The interval 139-162 (HSHGAHDHDHAHSHDHAHNDHSHD) is disordered. The span at 142–162 (GAHDHDHAHSHDHAHNDHSHD) shows a compositional bias: basic and acidic residues. The chain crosses the membrane as a helical span at residues 170–190 (GIYVIAGILVFMMVEQLVRII). N248 is a glycosylation site (N-linked (GlcNAc...) asparagine). A run of 3 helical transmembrane segments spans residues 255-275 (IGAS…TVLL), 304-324 (VTAL…NPVL), and 331-351 (GAIM…SVIP). N361 carries an N-linked (GlcNAc...) asparagine glycan. The chain crosses the membrane as a helical span at residues 371 to 391 (SLVHLIAICMGVGMMYIVSLV).

It belongs to the ZIP transporter (TC 2.A.5) family. KE4/Catsup subfamily.

It localises to the membrane. Zinc transporter which regulates intracellular zinc levels. Required for spermatogenesis in both hermaphrodites and males where it resides in an inactive form in immature sperm, spermatids, but is likely activated in response to reduced spe-4 and spe-6 function. Upon activation, mediates the release of zinc from internal stores in spermatids into the cytoplasm. The resulting increase in cytoplasmic zinc levels promotes spermatid activation and subsequent differentiation into mature motile sperm that are capable of fertilization. This is Zinc transporter zipt-7.1 from Caenorhabditis briggsae.